Here is a 627-residue protein sequence, read N- to C-terminus: Plastin-3 (627 aa).

EF-hand domains follow at residues 8 to 43 (EELE…ANLP) and 48 to 83 (KVRE…LKSG). Ca(2+)-binding residues include aspartate 21, asparagine 23, asparagine 25, glutamate 32, aspartate 61, asparagine 63, aspartate 65, methionine 67, and glutamate 72. Actin-binding regions lie at residues 105–378 (TSEL…ALTK) and 379–624 (PENQ…GRGM). Calponin-homology (CH) domains are found at residues 119-235 (EEER…KIGL), 263-374 (LSPE…NKYP), 393-503 (TREE…RRYT), and 515-624 (KVND…GRGM).

The protein localises to the cytoplasm. Functionally, actin-bundling protein. This is Plastin-3 (pls3) from Danio rerio (Zebrafish).